Reading from the N-terminus, the 84-residue chain is Delta-thalatoxin-Hhe1a (84 aa).

An N-terminal signal peptide occupies residues 1–19; the sequence is MAYQKIVFVALMLVLAVSA. A propeptide spanning residues 20 to 33 is cleaved from the precursor; sequence MRLPDQQDQDISVA. Intrachain disulfides connect cysteine 38–cysteine 78, cysteine 40–cysteine 68, and cysteine 61–cysteine 79.

Belongs to the sea anemone sodium channel inhibitory toxin family. Type II subfamily.

It is found in the secreted. The protein resides in the nematocyst. Its function is as follows. Binds specifically to the voltage-gated sodium channel (Nav) and delays its inactivation. The sequence is that of Delta-thalatoxin-Hhe1a from Heterodactyla hemprichii (Hemprich's sea anemone).